Here is a 571-residue protein sequence, read N- to C-terminus: 2-succinyl-5-enolpyruvyl-6-hydroxy-3-cyclohexene-1-carboxylate synthase (571 aa).

The protein belongs to the TPP enzyme family. MenD subfamily. As to quaternary structure, homodimer. Requires Mg(2+) as cofactor. Mn(2+) is required as a cofactor. Thiamine diphosphate serves as cofactor.

It carries out the reaction isochorismate + 2-oxoglutarate + H(+) = 5-enolpyruvoyl-6-hydroxy-2-succinyl-cyclohex-3-ene-1-carboxylate + CO2. The protein operates within quinol/quinone metabolism; 1,4-dihydroxy-2-naphthoate biosynthesis; 1,4-dihydroxy-2-naphthoate from chorismate: step 2/7. Its pathway is quinol/quinone metabolism; menaquinone biosynthesis. Catalyzes the thiamine diphosphate-dependent decarboxylation of 2-oxoglutarate and the subsequent addition of the resulting succinic semialdehyde-thiamine pyrophosphate anion to isochorismate to yield 2-succinyl-5-enolpyruvyl-6-hydroxy-3-cyclohexene-1-carboxylate (SEPHCHC). This Vibrio parahaemolyticus serotype O3:K6 (strain RIMD 2210633) protein is 2-succinyl-5-enolpyruvyl-6-hydroxy-3-cyclohexene-1-carboxylate synthase.